We begin with the raw amino-acid sequence, 317 residues long: Beta-ketoacyl-[acyl-carrier-protein] synthase III (317 aa).

Active-site residues include cysteine 112 and histidine 244. Positions glutamine 245–arginine 249 are ACP-binding. The active site involves asparagine 274.

The protein belongs to the thiolase-like superfamily. FabH family. In terms of assembly, homodimer.

The protein resides in the cytoplasm. It catalyses the reaction malonyl-[ACP] + acetyl-CoA + H(+) = 3-oxobutanoyl-[ACP] + CO2 + CoA. It functions in the pathway lipid metabolism; fatty acid biosynthesis. Its function is as follows. Catalyzes the condensation reaction of fatty acid synthesis by the addition to an acyl acceptor of two carbons from malonyl-ACP. Catalyzes the first condensation reaction which initiates fatty acid synthesis and may therefore play a role in governing the total rate of fatty acid production. Possesses both acetoacetyl-ACP synthase and acetyl transacylase activities. Its substrate specificity determines the biosynthesis of branched-chain and/or straight-chain of fatty acids. This chain is Beta-ketoacyl-[acyl-carrier-protein] synthase III, found in Baumannia cicadellinicola subsp. Homalodisca coagulata.